The sequence spans 101 residues: Small ribosomal subunit protein bS18c (101 aa).

Basic residues predominate over residues 1 to 19 (MNKSKRPFTKSKRSFRRRL). Residues 1 to 23 (MNKSKRPFTKSKRSFRRRLPPIQ) are disordered.

It belongs to the bacterial ribosomal protein bS18 family. In terms of assembly, part of the 30S ribosomal subunit.

Its subcellular location is the plastid. It localises to the chloroplast. This Lobularia maritima (Sweet alyssum) protein is Small ribosomal subunit protein bS18c.